Reading from the N-terminus, the 430-residue chain is Adenylosuccinate synthetase (430 aa).

GTP-binding positions include 11 to 17 and 39 to 41; these read GDEGKGK and GHS. Asp-12 acts as the Proton acceptor in catalysis. The Mg(2+) site is built by Asp-12 and Gly-39. Residues 12–15, 37–40, Thr-129, Arg-143, Asn-221, Thr-236, and Arg-300 contribute to the IMP site; these read DEGK and NAGH. Residue His-40 is the Proton donor of the active site. Residue 296–302 participates in substrate binding; that stretch reads VSTGRKR. GTP-binding positions include Arg-302, 328–330, and 412–414; these read KLD and GTG.

This sequence belongs to the adenylosuccinate synthetase family. In terms of assembly, homodimer. Mg(2+) serves as cofactor.

The protein resides in the cytoplasm. It catalyses the reaction IMP + L-aspartate + GTP = N(6)-(1,2-dicarboxyethyl)-AMP + GDP + phosphate + 2 H(+). Its pathway is purine metabolism; AMP biosynthesis via de novo pathway; AMP from IMP: step 1/2. Plays an important role in the de novo pathway and in the salvage pathway of purine nucleotide biosynthesis. Catalyzes the first committed step in the biosynthesis of AMP from IMP. This is Adenylosuccinate synthetase from Sordaria macrospora (strain ATCC MYA-333 / DSM 997 / K(L3346) / K-hell).